Here is a 190-residue protein sequence, read N- to C-terminus: Adenylate kinase (190 aa).

Gly11–Thr16 is a binding site for ATP. Positions Ser31–Val60 are NMP. Residues Thr32, Arg37, Gln58–Val60, Gly86–Arg89, and Gln93 contribute to the AMP site. The segment at Glu127–Asp137 is LID. Residue Arg128 coordinates ATP. AMP contacts are provided by Arg134 and Arg145. ATP is bound at residue Gly173.

This sequence belongs to the adenylate kinase family. As to quaternary structure, monomer.

It localises to the cytoplasm. The catalysed reaction is AMP + ATP = 2 ADP. It participates in purine metabolism; AMP biosynthesis via salvage pathway; AMP from ADP: step 1/1. Functionally, catalyzes the reversible transfer of the terminal phosphate group between ATP and AMP. Plays an important role in cellular energy homeostasis and in adenine nucleotide metabolism. In Parabacteroides distasonis (strain ATCC 8503 / DSM 20701 / CIP 104284 / JCM 5825 / NCTC 11152), this protein is Adenylate kinase.